The sequence spans 227 residues: NAD(P)H-hydrate epimerase (227 aa).

The 218-residue stretch at 10 to 227 folds into the YjeF N-terminal domain; it reads MRALETAAFN…GKIMVQYIGL (218 aa). 62-66 contacts (6S)-NADPHX; sequence NNGGD. Asn-63 and Asp-142 together coordinate K(+). (6S)-NADPHX-binding positions include 146–152 and Asp-176; that span reads GIGLNRP. Ser-179 contributes to the K(+) binding site.

It belongs to the NnrE/AIBP family. Requires K(+) as cofactor.

It catalyses the reaction (6R)-NADHX = (6S)-NADHX. The catalysed reaction is (6R)-NADPHX = (6S)-NADPHX. Functionally, catalyzes the epimerization of the S- and R-forms of NAD(P)HX, a damaged form of NAD(P)H that is a result of enzymatic or heat-dependent hydration. This is a prerequisite for the S-specific NAD(P)H-hydrate dehydratase to allow the repair of both epimers of NAD(P)HX. This Roseobacter litoralis (strain ATCC 49566 / DSM 6996 / JCM 21268 / NBRC 15278 / OCh 149) protein is NAD(P)H-hydrate epimerase.